Reading from the N-terminus, the 286-residue chain is NADPH-dependent 7-cyano-7-deazaguanine reductase (286 aa).

A substrate-binding site is contributed by 92–94 (IES). NADPH is bound at residue 94-95 (SK). Cys-194 functions as the Thioimide intermediate in the catalytic mechanism. Asp-201 serves as the catalytic Proton donor. 233–234 (HE) lines the substrate pocket. 262–263 (RG) lines the NADPH pocket.

Belongs to the GTP cyclohydrolase I family. QueF type 2 subfamily. Homodimer.

The protein resides in the cytoplasm. The catalysed reaction is 7-aminomethyl-7-carbaguanine + 2 NADP(+) = 7-cyano-7-deazaguanine + 2 NADPH + 3 H(+). The protein operates within tRNA modification; tRNA-queuosine biosynthesis. Catalyzes the NADPH-dependent reduction of 7-cyano-7-deazaguanine (preQ0) to 7-aminomethyl-7-deazaguanine (preQ1). This is NADPH-dependent 7-cyano-7-deazaguanine reductase from Shewanella sp. (strain MR-4).